The chain runs to 361 residues: Mitochondrial import receptor subunit TOM40 homolog (361 aa).

Positions 1–73 (MGNVLAASSP…GAAAASEDGS (73 aa)) are disordered. A compositionally biased stretch (pro residues) spans 11-36 (PAGPPPPPTPSLVGLPPPPPSPPGFT). Residues 40–50 (LGGGLGTGSST) are compositionally biased toward gly residues. Residues 51 to 69 (GRGSERTPGAAASGAAAAS) show a composition bias toward low complexity.

This sequence belongs to the Tom40 family. Forms part of the preprotein translocase complex of the outer mitochondrial membrane (TOM complex) which consists of at least 7 different proteins (TOMM5, TOMM6, TOMM7, TOMM20, TOMM22, TOMM40 and TOMM70). Interacts with mitochondrial targeting sequences. Interacts with TIMM29; linking the TIM22 complex to the TOM complex. Forms a complex with BCAP31 (via C-terminus) which mediates the translocation of components of the mitochondrial membrane respiratory chain NADH dehydrogenase (Complex I) from the cytosol to the mitochondria. Interacts (via N-terminus) with CYP1A1 (via mitochondrial targeting signal); this interaction is required for CYP1A1 translocation across the mitochondrial outer membrane.

The protein resides in the mitochondrion outer membrane. Its function is as follows. Channel-forming protein essential for import of protein precursors into mitochondria. Plays a role in the assembly of the mitochondrial membrane respiratory chain NADH dehydrogenase (Complex I) by forming a complex with BCAP31 and mediating the translocation of Complex I components from the cytosol to the mitochondria. The polypeptide is Mitochondrial import receptor subunit TOM40 homolog (Tomm40) (Mus musculus (Mouse)).